We begin with the raw amino-acid sequence, 379 residues long: Protein RecA (379 aa).

Positions 1-14 are enriched in low complexity; the sequence is MSNEIKSISSSNSS. The tract at residues 1-24 is disordered; the sequence is MSNEIKSISSSNSSCPPNEARSGE. 84–91 lines the ATP pocket; it reads GPESSGKT.

The protein belongs to the RecA family.

Its subcellular location is the cytoplasm. Can catalyze the hydrolysis of ATP in the presence of single-stranded DNA, the ATP-dependent uptake of single-stranded DNA by duplex DNA, and the ATP-dependent hybridization of homologous single-stranded DNAs. It interacts with LexA causing its activation and leading to its autocatalytic cleavage. This chain is Protein RecA, found in Prochlorococcus marinus (strain SARG / CCMP1375 / SS120).